Reading from the N-terminus, the 585-residue chain is Arginine--tRNA ligase (585 aa).

Positions 131 to 141 match the 'HIGH' region motif; that stretch reads ANPTGPMHVGH.

Belongs to the class-I aminoacyl-tRNA synthetase family. Monomer.

The protein resides in the cytoplasm. The catalysed reaction is tRNA(Arg) + L-arginine + ATP = L-arginyl-tRNA(Arg) + AMP + diphosphate. The polypeptide is Arginine--tRNA ligase (Brucella suis (strain ATCC 23445 / NCTC 10510)).